The sequence spans 727 residues: Catalase-peroxidase (727 aa).

Residues 1 to 26 (MSDEKKCPVTGRTSSQVAGSGTSNKD) form a disordered region. Positions 11 to 26 (GRTSSQVAGSGTSNKD) are enriched in polar residues. A cross-link (tryptophyl-tyrosyl-methioninium (Trp-Tyr) (with M-245)) is located at residues 96 to 219 (WHSAGTYRIG…LAAVQMGLIY (124 aa)). His97 functions as the Proton acceptor in the catalytic mechanism. A cross-link (tryptophyl-tyrosyl-methioninium (Tyr-Met) (with W-96)) is located at residues 219–245 (YVNPEGPNGDPNAVASGKDVRETFARM). His260 lines the heme b pocket. A compositionally biased stretch (basic and acidic residues) spans 346 to 362 (SDPEAKKAVPDAHDPSK). The segment at 346–365 (SDPEAKKAVPDAHDPSKTHP) is disordered.

Belongs to the peroxidase family. Peroxidase/catalase subfamily. Homodimer or homotetramer. Heme b is required as a cofactor. Post-translationally, formation of the three residue Trp-Tyr-Met cross-link is important for the catalase, but not the peroxidase activity of the enzyme.

It catalyses the reaction H2O2 + AH2 = A + 2 H2O. It carries out the reaction 2 H2O2 = O2 + 2 H2O. Functionally, bifunctional enzyme with both catalase and broad-spectrum peroxidase activity. This chain is Catalase-peroxidase, found in Maridesulfovibrio salexigens (strain ATCC 14822 / DSM 2638 / NCIMB 8403 / VKM B-1763) (Desulfovibrio salexigens).